Here is an 86-residue protein sequence, read N- to C-terminus: RQC P-site tRNA stabilizing factor (86 aa).

The S4 RNA-binding domain occupies 1–62 (MRLDKFLKVS…QKLVTVQVNE (62 aa)).

Belongs to the RqcP family. In terms of assembly, associates with stalled 50S ribosomal subunits. Binds to RqcH, 23S rRNA and the P-site tRNA. Does not require RqcH for association with 50S subunits. Crystallized 50S subunits are variously associated with an A/P-site tRNA with or without RqcH, as well as with P- and E-site tRNAs but no RqcH. Displaced from the 50S subunit by puromycin but not thiostrepton.

Its function is as follows. Key component of the ribosome quality control system (RQC), a ribosome-associated complex that mediates the extraction of incompletely synthesized nascent chains from stalled ribosomes and their subsequent degradation. RqcH recruits Ala-charged tRNA, and with RqcP directs the elongation of stalled nascent chains on 50S ribosomal subunits, leading to non-templated C-terminal alanine extensions (Ala tail). The Ala tail promotes nascent chain degradation. RqcP is associated with the translocation-like movement of the peptidyl-tRNA from the A-site into the P-site. RqcH, RqcP and charged tRNA(Ala) are necessary and sufficient to add an Ala tail to a model stalled nascent peptide; does not add Val. This chain is RQC P-site tRNA stabilizing factor, found in Bacillus subtilis (strain 168).